A 316-amino-acid polypeptide reads, in one-letter code: Epoxide hydrolase 2 (316 aa).

The region spanning 25-302 (PAVLFLHGFP…AAHFINQERP (278 aa)) is the AB hydrolase-1 domain. The active-site Nucleophile is Asp101. Tyr150 is a binding site for an epoxide. The Proton donor role is filled by Tyr230. The active-site Proton acceptor is the His295.

The protein belongs to the AB hydrolase superfamily. Epoxide hydrolase family. Homodimer. As to expression, highly expressed in young fruits 15 days after anthesis (15-DAA). Also observed in stems and leaves.

It carries out the reaction an epoxide + H2O = an ethanediol. The catalysed reaction is (24S)-24,25-epoxycucurbitadienol + H2O = (24R)-24,25-dihydroxycucurbitadienol. Its pathway is secondary metabolite biosynthesis; terpenoid biosynthesis. Epoxide hydrolase involved in the biosynthesis of cucurbitacin and mogroside tetracyclic triterpene natural products (e.g. siamenoside I and mogrosides IV, V and VI). Cucurbitacins have cytotoxic properties and exhibit deterrent taste as a defense barrier against herbivores. Mogrosides are nonsugar highly oxygenated compounds used as high-intensity zero-calorie sweeteners; they also possess pharmacological properties such as regulating immunity, lowering blood sugar and lipid levels, protecting the liver, and acting as antioxidants and antitumor agents. Catalyzes the hydrolysis of aromatic epoxide-containing substrates, such as the conversion of 24,25-epoxycucurbitadienol to 24,25-dihydroxycucurbitadienol. The polypeptide is Epoxide hydrolase 2 (Siraitia grosvenorii (Monk's fruit)).